We begin with the raw amino-acid sequence, 348 residues long: UDP-3-O-acylglucosamine N-acyltransferase (348 aa).

Residue His237 is the Proton acceptor of the active site.

It belongs to the transferase hexapeptide repeat family. LpxD subfamily. In terms of assembly, homotrimer.

It catalyses the reaction a UDP-3-O-[(3R)-3-hydroxyacyl]-alpha-D-glucosamine + a (3R)-hydroxyacyl-[ACP] = a UDP-2-N,3-O-bis[(3R)-3-hydroxyacyl]-alpha-D-glucosamine + holo-[ACP] + H(+). It participates in bacterial outer membrane biogenesis; LPS lipid A biosynthesis. Its function is as follows. Catalyzes the N-acylation of UDP-3-O-acylglucosamine using 3-hydroxyacyl-ACP as the acyl donor. Is involved in the biosynthesis of lipid A, a phosphorylated glycolipid that anchors the lipopolysaccharide to the outer membrane of the cell. The polypeptide is UDP-3-O-acylglucosamine N-acyltransferase (Geotalea daltonii (strain DSM 22248 / JCM 15807 / FRC-32) (Geobacter daltonii)).